The following is a 439-amino-acid chain: Proton pump-interactor 4 (439 aa).

A coiled-coil region spans residues 286–354 (KEEKEIDEET…AKKKKAVCKS (69 aa)). Residues 415-435 (LWVWTVSSAAVALPLALLVVF) traverse the membrane as a helical segment.

The protein belongs to the plant Proton pump-interactor protein family.

The protein localises to the cell membrane. It localises to the endoplasmic reticulum membrane. Functionally, may regulate plasma membrane ATPase activity. This Arabidopsis thaliana (Mouse-ear cress) protein is Proton pump-interactor 4 (PPI4).